We begin with the raw amino-acid sequence, 463 residues long: Increased DNA methylation 3 (463 aa).

A compositionally biased stretch (basic and acidic residues) spans asparagine 169 to arginine 182. Disordered stretches follow at residues asparagine 169–serine 199 and arginine 300–threonine 347. A compositionally biased stretch (polar residues) spans glycine 184–serine 199. The segment covering arginine 300 to threonine 310 has biased composition (basic residues).

As to quaternary structure, interacts with MBD7 (via C-terminus), IDM1 and IDM2. Part of a complex made of MBD7, IDM1, IDM2 and IDM3.

Its subcellular location is the nucleus. Functionally, acts as an anti-silencing factor that prevents DNA hypermethylation and gene repression. The polypeptide is Increased DNA methylation 3 (Arabidopsis thaliana (Mouse-ear cress)).